The following is a 366-amino-acid chain: C-X-C chemokine receptor type 3 (366 aa).

The Extracellular segment spans residues 1–55 (MVPEMSERQEFQASDFAYLLENSSYDYGENETYFCCTSPPCPQDFSLNFDRTFLP). N-linked (GlcNAc...) asparagine glycosylation is present at N22. Residues Y25 and Y27 each carry the sulfotyrosine modification. N-linked (GlcNAc...) asparagine glycosylation occurs at N30. The chain crosses the membrane as a helical span at residues 56–76 (VLYSLLFVLGLLGNGIVAVVL). Topologically, residues 77–88 (LSQRAALSSTDT) are cytoplasmic. Residues 89-109 (FLLHLAVADALLVLTLPLWAV) traverse the membrane as a helical segment. The Extracellular portion of the chain corresponds to 110 to 124 (DAAIQWVFGSGLCKV). C122 and C201 are joined by a disulfide. Residues 125–145 (AGALFNINFYAGALLLACISF) form a helical membrane-spanning segment. Residues 146 to 167 (DRYLSIVHATQLYRRGPPTRVA) are Cytoplasmic-facing. Residues 168–188 (LTCVAVWGLCLLFALPDFIFL) traverse the membrane as a helical segment. Over 189–221 (SSHHDNRLNATHCQYNFPQEGHTALRILQLVAG) the chain is Extracellular. The N-linked (GlcNAc...) asparagine glycan is linked to N197. A helical membrane pass occupies residues 222-242 (FLLPLLVMAYCYARILAVLLV). The Cytoplasmic segment spans residues 243 to 254 (SRGQRRLRAMRL). The helical transmembrane segment at 255–275 (VVVVVVAFALCWTPYHLVVLV) threads the bilayer. The Extracellular portion of the chain corresponds to 276–299 (DTLMDLGALARNCGRESSVDIAKS). A helical transmembrane segment spans residues 300–320 (VTSGMGYMHCCLNPLLYAFVG). Over 321–366 (VKFRERMWVLLVRLGCPDQRCHQRQPSASRRESSWSETTEASYSGL) the chain is Cytoplasmic. Residues 341 to 366 (CHQRQPSASRRESSWSETTEASYSGL) form a disordered region. Positions 355-366 (WSETTEASYSGL) are enriched in low complexity.

The protein belongs to the G-protein coupled receptor 1 family. Homomer. Forms heteromers with ACKR4. Interacts with PF4/CXCL4. Sulfation on Tyr-25 and Tyr-27 is essential for CXCL10 binding. Post-translationally, N-glycosylated.

The protein resides in the cell membrane. Functionally, receptor for the C-X-C chemokine CXCL9, CXCL10 and CXCL11 and mediates the proliferation, survival and angiogenic activity of mesangial cells through a heterotrimeric G-protein signaling pathway. Probably promotes cell chemotaxis response. Binds to CCL21. Upon activation by PF4, induces activated T-lymphocytes migration mediated via downstream Ras/extracellular signal-regulated kinase (ERK) signaling. The polypeptide is C-X-C chemokine receptor type 3 (CXCR3) (Bos taurus (Bovine)).